Reading from the N-terminus, the 240-residue chain is Ribonuclease PH (240 aa).

Residues Arg-87 and 125–127 (GTR) contribute to the phosphate site.

This sequence belongs to the RNase PH family. Homohexameric ring arranged as a trimer of dimers.

The enzyme catalyses tRNA(n+1) + phosphate = tRNA(n) + a ribonucleoside 5'-diphosphate. Phosphorolytic 3'-5' exoribonuclease that plays an important role in tRNA 3'-end maturation. Removes nucleotide residues following the 3'-CCA terminus of tRNAs; can also add nucleotides to the ends of RNA molecules by using nucleoside diphosphates as substrates, but this may not be physiologically important. Probably plays a role in initiation of 16S rRNA degradation (leading to ribosome degradation) during starvation. The polypeptide is Ribonuclease PH (Pseudomonas putida (strain ATCC 47054 / DSM 6125 / CFBP 8728 / NCIMB 11950 / KT2440)).